We begin with the raw amino-acid sequence, 100 residues long: Urease subunit gamma (100 aa).

Belongs to the urease gamma subunit family. In terms of assembly, heterotrimer of UreA (gamma), UreB (beta) and UreC (alpha) subunits. Three heterotrimers associate to form the active enzyme.

It is found in the cytoplasm. It catalyses the reaction urea + 2 H2O + H(+) = hydrogencarbonate + 2 NH4(+). It functions in the pathway nitrogen metabolism; urea degradation; CO(2) and NH(3) from urea (urease route): step 1/1. The chain is Urease subunit gamma from Rhodopseudomonas palustris (strain BisB5).